Here is an 815-residue protein sequence, read N- to C-terminus: MSSSTISAMLMGAADGDLNYLNSTPIGSSLLDDMGLDEDDFQSSSFEVFIPESYDSKFMSDYEYISKNANRFMKCKSREYAIQGELLKFFIIVRPPDDSKKRQKQQQIQQLLQQKQKQILINQSNTSTPPPPQKSIITNSDSPRLIVSDTTSTTKIEEQQPPPPPPQEEQQEQDSITVLQPSTSSSSNLLFELQLRLASDYEKSTKENQNPLNIIDYNPKHSFVNTEMKNDHISSSKSATSYLRQNTLNVNNNKNNKNQNNNNNNNIENSNNTNSRFIGDVVEVSSPFTFKDTSNPYQKPNFFRLSNGDLVFPIEVPIYIREINEDKLITMVIKINRPKNNRNNIASSDNKLERLIQGGAVDKSVNYTMRTSTASLGVGGTIHNNKVTRTILKNFTLIQPMKVLLQSNTTIGCKNLICVSLENTHPTSNITIKSLDIYLFHVLNMESTTIIDSVSSVSSIPTHRQIGNLVKVNEHYVISNLSNHRLPIELEPSNQYSMVLSVEPSSIQKTLQPTEGFHTKVELSWHIPCSSGQVLSLYELRAQNPPFTTNLMISTDYKSPVILNEKFLVKFNISNLSNSLKNLTINIPPSIIKQNGSSSSNNNSKLSSTNSGQTSDNPINSSNGGQSIKKQGSNLSLNRQQSSTKLNNQSNNNNNNNANTTNQNNLNSSRYIPVETTIQFSELSNKSLLSYEEIQRNSVNLLCLEKSVHIGPVNSKNSISASIEFLPLSVGIFEIQNITLYDSIEQITYSLKEPLQICCVSREHNNEEHNNNNKENNNENNKENINNNNNIINNNNDNNCNENNNNCNENNEEIK.

4 disordered regions span residues 123–183, 249–274, 592–668, and 765–815; these read QSNT…QPST, NVNN…NNTN, IKQN…NLNS, and NNEE…EEIK. 2 stretches are compositionally biased toward polar residues: residues 135-154 and 174-183; these read SIIT…TSTT and DSITVLQPST. The segment covering 595–611 has biased composition (low complexity); it reads NGSSSSNNNSKLSSTNS. Over residues 612 to 639 the composition is skewed to polar residues; the sequence is GQTSDNPINSSNGGQSIKKQGSNLSLNR. The segment covering 640–668 has biased composition (low complexity); sequence QQSSTKLNNQSNNNNNNNANTTNQNNLNS. Positions 765–782 are enriched in basic and acidic residues; it reads NNEEHNNNNKENNNENNK. Over residues 783 to 809 the composition is skewed to low complexity; the sequence is ENINNNNNIINNNNDNNCNENNNNCNE.

This is an uncharacterized protein from Dictyostelium discoideum (Social amoeba).